A 193-amino-acid chain; its full sequence is NAD(P)H-quinone oxidoreductase subunit J (193 aa).

The segment at 1–21 (MSDSAPTNPTPTNPAPEESAS) is disordered.

It belongs to the complex I 30 kDa subunit family. In terms of assembly, NDH-1 can be composed of about 15 different subunits; different subcomplexes with different compositions have been identified which probably have different functions.

The protein resides in the cellular thylakoid membrane. It carries out the reaction a plastoquinone + NADH + (n+1) H(+)(in) = a plastoquinol + NAD(+) + n H(+)(out). The catalysed reaction is a plastoquinone + NADPH + (n+1) H(+)(in) = a plastoquinol + NADP(+) + n H(+)(out). Its function is as follows. NDH-1 shuttles electrons from an unknown electron donor, via FMN and iron-sulfur (Fe-S) centers, to quinones in the respiratory and/or the photosynthetic chain. The immediate electron acceptor for the enzyme in this species is believed to be plastoquinone. Couples the redox reaction to proton translocation, and thus conserves the redox energy in a proton gradient. Cyanobacterial NDH-1 also plays a role in inorganic carbon-concentration. The sequence is that of NAD(P)H-quinone oxidoreductase subunit J from Synechococcus sp. (strain CC9902).